A 402-amino-acid polypeptide reads, in one-letter code: Phosphopentomutase (402 aa).

Residues D10, D301, H306, D342, H343, and H354 each coordinate Mn(2+).

Belongs to the phosphopentomutase family. Requires Mn(2+) as cofactor.

Its subcellular location is the cytoplasm. The enzyme catalyses 2-deoxy-alpha-D-ribose 1-phosphate = 2-deoxy-D-ribose 5-phosphate. It catalyses the reaction alpha-D-ribose 1-phosphate = D-ribose 5-phosphate. Its pathway is carbohydrate degradation; 2-deoxy-D-ribose 1-phosphate degradation; D-glyceraldehyde 3-phosphate and acetaldehyde from 2-deoxy-alpha-D-ribose 1-phosphate: step 1/2. In terms of biological role, isomerase that catalyzes the conversion of deoxy-ribose 1-phosphate (dRib-1-P) and ribose 1-phosphate (Rib-1-P) to deoxy-ribose 5-phosphate (dRib-5-P) and ribose 5-phosphate (Rib-5-P), respectively. In Aeromonas salmonicida (strain A449), this protein is Phosphopentomutase.